We begin with the raw amino-acid sequence, 186 residues long: Ribosome maturation factor RimM (186 aa).

Residues 93–168 (EDDFYLVDLI…VLIDPPQEEN (76 aa)) enclose the PRC barrel domain. The interval 163–186 (PPQEENAPEFGRNELGHDDGGEAA) is disordered. Residues 173–186 (GRNELGHDDGGEAA) are compositionally biased toward basic and acidic residues.

Belongs to the RimM family. Binds ribosomal protein uS19.

The protein resides in the cytoplasm. Functionally, an accessory protein needed during the final step in the assembly of 30S ribosomal subunit, possibly for assembly of the head region. Essential for efficient processing of 16S rRNA. May be needed both before and after RbfA during the maturation of 16S rRNA. It has affinity for free ribosomal 30S subunits but not for 70S ribosomes. This Granulibacter bethesdensis (strain ATCC BAA-1260 / CGDNIH1) protein is Ribosome maturation factor RimM.